The sequence spans 186 residues: Putative adenylate kinase (186 aa).

ATP is bound by residues glycine 10, glycine 12, lysine 13, threonine 14, and serine 15. Residues 30–53 (HLNELIKEEHLYTEVDEKRDSVVA) are NMP. Residues 108 to 118 (KRGYSEEKVNE) are LID. Arginine 109 is a binding site for ATP.

The protein belongs to the adenylate kinase family. AK6 subfamily. As to quaternary structure, interacts with uS11. Not a structural component of 40S pre-ribosomes, but transiently interacts with them by binding to uS11.

It catalyses the reaction AMP + ATP = 2 ADP. The catalysed reaction is ATP + H2O = ADP + phosphate + H(+). Functionally, broad-specificity nucleoside monophosphate (NMP) kinase that catalyzes the reversible transfer of the terminal phosphate group between nucleoside triphosphates and monophosphates. Also has ATPase activity. Involved in the late maturation steps of the 30S ribosomal particles, specifically 16S rRNA maturation. While NMP activity is not required for ribosome maturation, ATPase activity is. Associates transiently with small ribosomal subunit protein uS11. ATP hydrolysis breaks the interaction with uS11. May temporarily remove uS11 from the ribosome to enable a conformational change of the ribosomal RNA that is needed for the final maturation step of the small ribosomal subunit. The protein is Putative adenylate kinase of Methanosarcina acetivorans (strain ATCC 35395 / DSM 2834 / JCM 12185 / C2A).